A 142-amino-acid polypeptide reads, in one-letter code: Large ribosomal subunit protein uL11 (142 aa).

Belongs to the universal ribosomal protein uL11 family. In terms of assembly, part of the ribosomal stalk of the 50S ribosomal subunit. Interacts with L10 and the large rRNA to form the base of the stalk. L10 forms an elongated spine to which L12 dimers bind in a sequential fashion forming a multimeric L10(L12)X complex. In terms of processing, one or more lysine residues are methylated.

Forms part of the ribosomal stalk which helps the ribosome interact with GTP-bound translation factors. The chain is Large ribosomal subunit protein uL11 from Pasteurella multocida (strain Pm70).